The following is a 353-amino-acid chain: Nuclear hormone receptor family member nhr-27 (353 aa).

The nuclear receptor DNA-binding region spans 24–102 (VSNCVVCGRL…KGMLDLSRYT (79 aa)). 2 NR C4-type zinc fingers span residues 27–47 (CVVCGRLTSLFNYGAHSCSAC) and 64–85 (CKYSGNCFENFKRAIHFECKFC). One can recognise an NR LBD domain in the interval 119–351 (ETLFLTMTVS…SQVHQDVIEF (233 aa)). An AF-2 region spans residues 340–351 (QPSQVHQDVIEF).

It belongs to the nuclear hormone receptor family.

It is found in the nucleus. Functionally, ligand-activated transcription factor. Involved in lifespan extension in a manner dependent upon mitochondrial function. The sequence is that of Nuclear hormone receptor family member nhr-27 from Caenorhabditis elegans.